A 332-amino-acid chain; its full sequence is Anthranilate phosphoribosyltransferase (332 aa).

Residues Gly80, 83-84 (GD), Thr88, 90-93 (NLST), 108-116 (KHGNRSASG), and Ser120 each bind 5-phospho-alpha-D-ribose 1-diphosphate. Gly80 contributes to the anthranilate binding site. Ser92 is a Mg(2+) binding site. Asn111 provides a ligand contact to anthranilate. Arg166 serves as a coordination point for anthranilate. Residues Asp224 and Glu225 each contribute to the Mg(2+) site.

This sequence belongs to the anthranilate phosphoribosyltransferase family. Homodimer. The cofactor is Mg(2+).

It catalyses the reaction N-(5-phospho-beta-D-ribosyl)anthranilate + diphosphate = 5-phospho-alpha-D-ribose 1-diphosphate + anthranilate. It functions in the pathway amino-acid biosynthesis; L-tryptophan biosynthesis; L-tryptophan from chorismate: step 2/5. Functionally, catalyzes the transfer of the phosphoribosyl group of 5-phosphorylribose-1-pyrophosphate (PRPP) to anthranilate to yield N-(5'-phosphoribosyl)-anthranilate (PRA). In Pyrobaculum calidifontis (strain DSM 21063 / JCM 11548 / VA1), this protein is Anthranilate phosphoribosyltransferase.